Consider the following 64-residue polypeptide: Conotoxin Vc1.3 (64 aa).

The first 21 residues, 1 to 21, serve as a signal peptide directing secretion; the sequence is MGMRMMFTVFLLVVLATTVVS. The propeptide occupies 22–43; the sequence is FTSDRASDGRKAAASDLITLTI. Disulfide bonds link Cys-46–Cys-52 and Cys-47–Cys-60. Cysteine amide is present on Cys-60.

The protein belongs to the conotoxin A superfamily. Expressed by the venom duct.

It localises to the secreted. In terms of biological role, may act as a toxin. This chain is Conotoxin Vc1.3, found in Conus victoriae (Queen Victoria cone).